The primary structure comprises 165 residues: Ubiquitin D (165 aa).

Ubiquitin-like domains are found at residues 6–81 (SCLC…LKVV) and 90–163 (LFLV…CYCI).

The protein belongs to the ubiquitin D family. As to quaternary structure, interacts directly with the 26S proteasome. Interacts with NUB1; this interaction facilitates the linking of UBD-conjugated target protein to the proteasome complex and accelerates its own degradation and that of its conjugates. Interacts (via ubiquitin-like 1 domain) with the spindle checkpoint protein MAD2L1 during mitosis. Present in aggresomes of proteasome inhibited cells. Interacts with HDAC6 under proteasome impairment conditions. Forms a thioester with UBA6 in cells stimulated with tumor necrosis factor-alpha (TNFa) and interferon-gamma (IFNg). Interacts with SQSTM1 and TP53/p53. Can be acetylated. As to expression, constitutively expressed in mature dendritic cells and B-cells. Mostly expressed in the reticuloendothelial system (e.g. thymus, spleen), the gastrointestinal system, kidney, lung and prostate gland.

It is found in the nucleus. Its subcellular location is the cytoplasm. In terms of biological role, ubiquitin-like protein modifier which can be covalently attached to target proteins and subsequently leads to their degradation by the 26S proteasome, in a NUB1-dependent manner. Conjugation to the target protein is activated by UBA6 via adenylation of its C-terminal glycine. Promotes the expression of the proteasome subunit beta type-9 (PSMB9/LMP2). Regulates TNF-alpha-induced and LPS-mediated activation of the central mediator of innate immunity NF-kappa-B by promoting TNF-alpha-mediated proteasomal degradation of ubiquitinated-I-kappa-B-alpha. Required for TNF-alpha-induced p65 nuclear translocation in renal tubular epithelial cells (RTECs). May be involved in dendritic cell (DC) maturation, the process by which immature dendritic cells differentiate into fully competent antigen-presenting cells that initiate T-cell responses. Mediates mitotic non-disjunction and chromosome instability, in long-term in vitro culture and cancers, by abbreviating mitotic phase and impairing the kinetochore localization of MAD2L1 during the prometaphase stage of the cell cycle. May be involved in the formation of aggresomes when proteasome is saturated or impaired. Mediates apoptosis in a caspase-dependent manner, especially in renal epithelium and tubular cells during renal diseases such as polycystic kidney disease and Human immunodeficiency virus (HIV)-associated nephropathy (HIVAN). The polypeptide is Ubiquitin D (UBD) (Homo sapiens (Human)).